The sequence spans 200 residues: Imidazoleglycerol-phosphate dehydratase (200 aa).

Residues Glu-13, 39–47 (HMLTLLTFH), 68–72 (HHLIE), Arg-94, and Arg-116 contribute to the substrate site. The Mn(2+) site is built by His-39, His-68, His-69, and Glu-72. Mn(2+) contacts are provided by Glu-141, His-165, His-166, and Glu-169. Substrate is bound by residues 165–173 (HHIIEGMFK) and 195–197 (SSK).

It belongs to the imidazoleglycerol-phosphate dehydratase family. The cofactor is Mn(2+).

It is found in the cytoplasm. It carries out the reaction D-erythro-1-(imidazol-4-yl)glycerol 3-phosphate = 3-(imidazol-4-yl)-2-oxopropyl phosphate + H2O. It functions in the pathway amino-acid biosynthesis; L-histidine biosynthesis; L-histidine from 5-phospho-alpha-D-ribose 1-diphosphate: step 6/9. The chain is Imidazoleglycerol-phosphate dehydratase (hisB) from Lactococcus lactis subsp. lactis (strain IL1403) (Streptococcus lactis).